The primary structure comprises 858 residues: Leucine--tRNA ligase (858 aa).

The 'HIGH' region motif lies at 42–52 (PYPSGRLHMGH). The 'KMSKS' region motif lies at 618–622 (KMSKS). Lys621 is an ATP binding site.

It belongs to the class-I aminoacyl-tRNA synthetase family.

The protein localises to the cytoplasm. It carries out the reaction tRNA(Leu) + L-leucine + ATP = L-leucyl-tRNA(Leu) + AMP + diphosphate. This chain is Leucine--tRNA ligase, found in Vibrio atlanticus (strain LGP32) (Vibrio splendidus (strain Mel32)).